We begin with the raw amino-acid sequence, 199 residues long: Superoxide dismutase [Mn/Fe] 1 (199 aa).

H27, H81, D161, and H165 together coordinate Fe(3+). Mn(2+) is bound by residues H27, H81, D161, and H165.

This sequence belongs to the iron/manganese superoxide dismutase family. As to quaternary structure, homodimer. Can also form a heterodimer with SodM. The cofactor is Mn(2+). It depends on Fe(3+) as a cofactor.

It carries out the reaction 2 superoxide + 2 H(+) = H2O2 + O2. In terms of biological role, destroys superoxide anion radicals which are normally produced within the cells and which are toxic to biological systems. Catalyzes the dismutation of superoxide anion radicals into O2 and H2O2 by successive reduction and oxidation of the transition metal ion at the active site. The chain is Superoxide dismutase [Mn/Fe] 1 (sodA) from Staphylococcus aureus (strain USA300).